The primary structure comprises 211 residues: MRVLIAGLMASVFAIAGVSAAQAADRVDQVPEAPVAQEAPVKPAGSWEGFYLGGAGTYNMGDFGSDRHTYGFGGQVFTGYNWQQGQIVYGVESDLGYSGDDVSSGGVENKYGWNGSVRGRVGYDMNPFLLYGTAGLAIGDVKVSDDTSDESKTNFGYTVGAGVEAFVTNNITTRLEYRYTDYQSKDYDLDSGSFSRGYDENSVKLGIGVKF.

The first 23 residues, 1-23, serve as a signal peptide directing secretion; the sequence is MRVLIAGLMASVFAIAGVSAAQA.

Belongs to the Omp25/RopB family.

The protein localises to the cell outer membrane. The chain is 22 kDa outer membrane protein (ropB) from Rhizobium leguminosarum bv. viciae.